We begin with the raw amino-acid sequence, 118 residues long: Large ribosomal subunit protein uL18 (118 aa).

This sequence belongs to the universal ribosomal protein uL18 family. As to quaternary structure, part of the 50S ribosomal subunit; part of the 5S rRNA/L5/L18/L25 subcomplex. Contacts the 5S and 23S rRNAs.

Its function is as follows. This is one of the proteins that bind and probably mediate the attachment of the 5S RNA into the large ribosomal subunit, where it forms part of the central protuberance. This chain is Large ribosomal subunit protein uL18, found in Helicobacter pylori (strain P12).